Consider the following 289-residue polypeptide: Glycine-rich RNA-binding protein 5, mitochondrial (289 aa).

The transit peptide at 1 to 31 directs the protein to the mitochondrion; it reads MAFLSKVGRLFSQTSSHVTASSSMLQSIRCM. Positions 34-111 constitute an RRM domain; the sequence is SKIFVGGISY…RRIRVNYATE (78 aa). The segment at 219-289 is disordered; sequence QGSSTNAGFD…TDDGDVAKRA (71 aa). The span at 257–272 shows a compositional bias: polar residues; that stretch reads GSDNQFGDAENGNTEN.

Belongs to the GR-RBP family. In terms of assembly, homodimer. Interacts with MORF8/RIP1 AND RBG3/ORRM3. Binds to RBG2/ORRM5.

It is found in the mitochondrion. In terms of biological role, possibly has a role in RNA transcription or processing during stress. Binds RNAs and DNAs sequence with a preference to single-stranded nucleic acids. Displays strong affinity to poly(U) sequence. Involved in C-to-U editing of mitochondrial RNA. Functions as a major mitochondrial editing factor. Controls 44 percent of the mitochondrial editing sites. The sequence is that of Glycine-rich RNA-binding protein 5, mitochondrial from Arabidopsis thaliana (Mouse-ear cress).